The primary structure comprises 431 residues: Aspartate--tRNA(Asp/Asn) ligase (431 aa).

Glutamate 170 is a binding site for L-aspartate. The aspartate stretch occupies residues 192–195 (QLYK). Position 214 (arginine 214) interacts with L-aspartate. ATP is bound by residues 214–216 (RAE), 222–224 (RHL), and glutamate 354. Mg(2+)-binding residues include glutamate 354 and serine 357. L-aspartate-binding residues include serine 357 and arginine 361. 402-405 (GLER) lines the ATP pocket.

It belongs to the class-II aminoacyl-tRNA synthetase family. Type 2 subfamily. In terms of assembly, homodimer. Mg(2+) serves as cofactor.

The protein localises to the cytoplasm. The catalysed reaction is tRNA(Asx) + L-aspartate + ATP = L-aspartyl-tRNA(Asx) + AMP + diphosphate. Aspartyl-tRNA synthetase with relaxed tRNA specificity since it is able to aspartylate not only its cognate tRNA(Asp) but also tRNA(Asn). Reaction proceeds in two steps: L-aspartate is first activated by ATP to form Asp-AMP and then transferred to the acceptor end of tRNA(Asp/Asn). The chain is Aspartate--tRNA(Asp/Asn) ligase from Methanopyrus kandleri (strain AV19 / DSM 6324 / JCM 9639 / NBRC 100938).